Here is a 337-residue protein sequence, read N- to C-terminus: Carbonic anhydrase 14 (337 aa).

The N-terminal stretch at 1–15 (MLFSALLLEVIWILA) is a signal peptide. Residues 16–290 (ADGGQHWTYE…AGSSYTTGEM (275 aa)) are Extracellular-facing. The Alpha-carbonic anhydrase domain occupies 20-278 (QHWTYEGPHG…LNQRMVFASF (259 aa)). Cysteines 40 and 221 form a disulfide. The active-site Proton donor/acceptor is H84. H109, H111, and H135 together coordinate Zn(2+). A glycan (N-linked (GlcNAc...) asparagine) is linked at N213. Position 217–218 (217–218 (TT)) interacts with substrate. The helical transmembrane segment at 291–311 (LSLGVGILVGCLCLLLAVYFI) threads the bilayer. Over 312–337 (ARKIRKKRLENRKSVVFTSAQATTEA) the chain is Cytoplasmic. At S325 the chain carries Phosphoserine.

This sequence belongs to the alpha-carbonic anhydrase family. It depends on Zn(2+) as a cofactor. High expression in all parts of the central nervous system and lower expression in adult liver, heart, small intestine, colon, kidney, urinary bladder and skeletal muscle.

Its subcellular location is the membrane. It catalyses the reaction hydrogencarbonate + H(+) = CO2 + H2O. Its activity is regulated as follows. Activated by histamine, L-adrenaline, L- and D-histidine, and L- and D-phenylalanine. Inhibited by coumarins, saccharin, sulfonamide derivatives such as acetazolamide (AZA) and Foscarnet (phosphonoformate trisodium salt). In terms of biological role, reversible hydration of carbon dioxide. This is Carbonic anhydrase 14 (CA14) from Homo sapiens (Human).